The sequence spans 81 residues: Photosystem I iron-sulfur center (81 aa).

2 consecutive 4Fe-4S ferredoxin-type domains span residues 2 to 31 (AHSVKIYDTCIGCTQCVRACPTDVLEMIPW) and 39 to 68 (IASAPRTEDCVGCKRCESACPTDFLSVRVY). Residues cysteine 11, cysteine 14, cysteine 17, cysteine 21, cysteine 48, cysteine 51, cysteine 54, and cysteine 58 each coordinate [4Fe-4S] cluster.

The eukaryotic PSI reaction center is composed of at least 11 subunits. [4Fe-4S] cluster serves as cofactor.

It localises to the plastid. The protein resides in the chloroplast thylakoid membrane. The catalysed reaction is reduced [plastocyanin] + hnu + oxidized [2Fe-2S]-[ferredoxin] = oxidized [plastocyanin] + reduced [2Fe-2S]-[ferredoxin]. Its function is as follows. Apoprotein for the two 4Fe-4S centers FA and FB of photosystem I (PSI); essential for photochemical activity. FB is the terminal electron acceptor of PSI, donating electrons to ferredoxin. The C-terminus interacts with PsaA/B/D and helps assemble the protein into the PSI complex. Required for binding of PsaD and PsaE to PSI. PSI is a plastocyanin-ferredoxin oxidoreductase, converting photonic excitation into a charge separation, which transfers an electron from the donor P700 chlorophyll pair to the spectroscopically characterized acceptors A0, A1, FX, FA and FB in turn. The chain is Photosystem I iron-sulfur center from Cycas taitungensis (Prince sago).